The following is a 602-amino-acid chain: Probable translation initiation factor IF-2 (602 aa).

The region spanning 10 to 227 is the tr-type G domain; sequence LRQPIVVVLG…LLAGLTQNYM (218 aa). The segment at 19 to 26 is G1; sequence GHVDHGKT. Position 19-26 (19-26) interacts with GTP; the sequence is GHVDHGKT. Residues 44–48 are G2; that stretch reads EMTQE. The segment at 83-86 is G3; it reads DTPG. Residues 83–87 and 137–140 contribute to the GTP site; these read DTPGH and NKID. The interval 137–140 is G4; that stretch reads NKID. The G5 stretch occupies residues 205–207; that stretch reads SAK.

The protein belongs to the TRAFAC class translation factor GTPase superfamily. Classic translation factor GTPase family. IF-2 subfamily.

Its function is as follows. Function in general translation initiation by promoting the binding of the formylmethionine-tRNA to ribosomes. Seems to function along with eIF-2. The polypeptide is Probable translation initiation factor IF-2 (Sulfurisphaera tokodaii (strain DSM 16993 / JCM 10545 / NBRC 100140 / 7) (Sulfolobus tokodaii)).